Reading from the N-terminus, the 239-residue chain is Small ribosomal subunit protein uS2 (239 aa).

It belongs to the universal ribosomal protein uS2 family.

This chain is Small ribosomal subunit protein uS2, found in Lysinibacillus sphaericus (strain C3-41).